Here is a 463-residue protein sequence, read N- to C-terminus: Phosphomethylpyrimidine synthase (463 aa).

Substrate contacts are provided by residues asparagine 80, methionine 109, tyrosine 138, histidine 173, 193 to 195 (SRG), 234 to 237 (DGLR), and glutamate 273. Histidine 277 serves as a coordination point for Zn(2+). A substrate-binding site is contributed by tyrosine 300. Residue histidine 341 participates in Zn(2+) binding. Positions 421, 424, and 429 each coordinate [4Fe-4S] cluster.

It belongs to the ThiC family. Homodimer. [4Fe-4S] cluster is required as a cofactor.

The catalysed reaction is 5-amino-1-(5-phospho-beta-D-ribosyl)imidazole + S-adenosyl-L-methionine = 4-amino-2-methyl-5-(phosphooxymethyl)pyrimidine + CO + 5'-deoxyadenosine + formate + L-methionine + 3 H(+). The protein operates within cofactor biosynthesis; thiamine diphosphate biosynthesis. Its function is as follows. Catalyzes the synthesis of the hydroxymethylpyrimidine phosphate (HMP-P) moiety of thiamine from aminoimidazole ribotide (AIR) in a radical S-adenosyl-L-methionine (SAM)-dependent reaction. The sequence is that of Phosphomethylpyrimidine synthase from Anaeromyxobacter dehalogenans (strain 2CP-1 / ATCC BAA-258).